The primary structure comprises 515 residues: MTKRVLISVSDKAGIVEFAQELKKLGWEIISTGGTKVALDNAGVDTIAIDDVTGFPEMMDGRVKTLHPNIHGGLLARRDLDSHLEAVKDNKIELIDLVVVNLYPFKETILKPDVTYADAVENIDIGGPSMLRSAAKNHASVTVVVDPADYAVVLDELAANGETSYETRQRLAAKVFRHTAAYDALIAEYFTAQVGESKPEKLTLTYDLKQPMRYGENPQQDADFYQKALPTDYSIASAKQLNGKELSFNNIRDADAAIRIIRDFKDSPTVVALKHMNPCGIGQADDIETAWDYAYESDPVSIFGGIVVLNREVDAATAEKMHGVFLEIIIAPSYTDEALAILINKKKNLRILALPFNAQEASEVEAEYTGVVGGLLVQNQDVVKESPADWQVVTKRQPTETEATALEFAWKAIKYVKSNGIIVTNDHMTLGVGPGQTNRVASVRLAIDQAKDRLNGAVLASDAFFPFADNVEEIAKAGIKAIIQPGGSVRDQESIEAADKYGLTMVFTGVRHFRH.

The MGS-like domain maps to Met-1–Val-145.

Belongs to the PurH family.

It carries out the reaction (6R)-10-formyltetrahydrofolate + 5-amino-1-(5-phospho-beta-D-ribosyl)imidazole-4-carboxamide = 5-formamido-1-(5-phospho-D-ribosyl)imidazole-4-carboxamide + (6S)-5,6,7,8-tetrahydrofolate. The catalysed reaction is IMP + H2O = 5-formamido-1-(5-phospho-D-ribosyl)imidazole-4-carboxamide. It functions in the pathway purine metabolism; IMP biosynthesis via de novo pathway; 5-formamido-1-(5-phospho-D-ribosyl)imidazole-4-carboxamide from 5-amino-1-(5-phospho-D-ribosyl)imidazole-4-carboxamide (10-formyl THF route): step 1/1. It participates in purine metabolism; IMP biosynthesis via de novo pathway; IMP from 5-formamido-1-(5-phospho-D-ribosyl)imidazole-4-carboxamide: step 1/1. In Streptococcus pneumoniae (strain 70585), this protein is Bifunctional purine biosynthesis protein PurH.